Consider the following 612-residue polypeptide: Glucoamylase (612 aa).

Positions 1–19 are cleaved as a signal peptide; it reads MVSFSSCLRALALGSSVLA. Residues 20–25 constitute a propeptide that is removed on maturation; it reads VQPVLR. Asn39 carries an N-linked (GlcNAc...) asparagine glycan. Trp146 lines the substrate pocket. Catalysis depends on Asp202, which acts as the Proton acceptor. Catalysis depends on Glu205, which acts as the Proton donor. 3 disulfides stabilise this stretch: Cys236/Cys239, Cys248/Cys475, and Cys288/Cys296. The 107-residue stretch at 506-612 folds into the CBM20 domain; that stretch reads CQVPTTVSVT…KSAVQSDVWR (107 aa).

The protein belongs to the glycosyl hydrolase 15 family.

It carries out the reaction Hydrolysis of terminal (1-&gt;4)-linked alpha-D-glucose residues successively from non-reducing ends of the chains with release of beta-D-glucose.. The chain is Glucoamylase (glaA) from Aspergillus oryzae (strain ATCC 42149 / RIB 40) (Yellow koji mold).